A 237-amino-acid chain; its full sequence is Large ribosomal subunit protein uL3 (237 aa).

2 disordered regions span residues 133 to 155 (ASHG…DPGK) and 213 to 237 (PENA…EGAE). A compositionally biased stretch (polar residues) spans 135–150 (HGNSITHRSHGSTGQR). Gln-151 carries the post-translational modification N5-methylglutamine. Low complexity predominate over residues 220–237 (AGLRAGAKAEAAATEGAE).

This sequence belongs to the universal ribosomal protein uL3 family. Part of the 50S ribosomal subunit. Forms a cluster with proteins L14 and L19. Methylated by PrmB.

In terms of biological role, one of the primary rRNA binding proteins, it binds directly near the 3'-end of the 23S rRNA, where it nucleates assembly of the 50S subunit. This Brucella canis (strain ATCC 23365 / NCTC 10854 / RM-666) protein is Large ribosomal subunit protein uL3.